A 433-amino-acid chain; its full sequence is Keratin, type I cytoskeletal 47 kDa (433 aa).

The head stretch occupies residues 1–73 (MSYSTRSISQ…AFNVSVTSNN (73 aa)). Residues 74-109 (GKETMQNLNDRLANYLDRVRSLEQANHELELKIREY) are coil 1A. The IF rod domain occupies 74–385 (GKETMQNLND…RLLEGEDTRF (312 aa)). A linker 1 region spans residues 110–127 (LDKKAAVGSLDYSGYYNT). Residues 128–219 (INLLRSQIND…KNHEEELAVV (92 aa)) form a coil 1B region. A linker 12 region spans residues 220-242 (RSSARGNVDVQVDSAPPVDLAQI). The interval 243-381 (MADVRSQYES…ATYRRLLEGE (139 aa)) is coil 2. The segment at 382-433 (DTRFSQTETQKAVTIVSKEQSSSSIKKVKTVIEEVVDGKVVSSRVEELTETS) is tail.

Belongs to the intermediate filament family. Heterotetramer of two type I and two type II keratins.

This Xenopus laevis (African clawed frog) protein is Keratin, type I cytoskeletal 47 kDa (xk70a).